Consider the following 157-residue polypeptide: Small ribosomal subunit protein uS7 (157 aa).

It belongs to the universal ribosomal protein uS7 family. As to quaternary structure, part of the 30S ribosomal subunit. Contacts proteins S9 and S11.

Functionally, one of the primary rRNA binding proteins, it binds directly to 16S rRNA where it nucleates assembly of the head domain of the 30S subunit. Is located at the subunit interface close to the decoding center, probably blocks exit of the E-site tRNA. This is Small ribosomal subunit protein uS7 from Caldicellulosiruptor saccharolyticus (strain ATCC 43494 / DSM 8903 / Tp8T 6331).